A 340-amino-acid chain; its full sequence is Beta-hexosaminidase (340 aa).

Substrate contacts are provided by residues Asp60, Arg68, Arg127, and 157–158; that span reads KH. The active-site Proton donor/acceptor is His170. The Nucleophile role is filled by Asp242.

It belongs to the glycosyl hydrolase 3 family. NagZ subfamily.

It localises to the cytoplasm. The enzyme catalyses Hydrolysis of terminal non-reducing N-acetyl-D-hexosamine residues in N-acetyl-beta-D-hexosaminides.. It participates in cell wall biogenesis; peptidoglycan recycling. Its function is as follows. Plays a role in peptidoglycan recycling by cleaving the terminal beta-1,4-linked N-acetylglucosamine (GlcNAc) from peptide-linked peptidoglycan fragments, giving rise to free GlcNAc, anhydro-N-acetylmuramic acid and anhydro-N-acetylmuramic acid-linked peptides. The sequence is that of Beta-hexosaminidase from Glaesserella parasuis serovar 5 (strain SH0165) (Haemophilus parasuis).